We begin with the raw amino-acid sequence, 348 residues long: Sex-lethal homolog (348 aa).

RRM domains follow at residues 110–188 (TNLI…YARP) and 196–276 (TNLY…LAEE). Residues 296–310 (GGGGGGGGGGGGGMG) are compositionally biased toward gly residues. Positions 296–317 (GGGGGGGGGGGGGMGGPPPPPM) are disordered.

Its subcellular location is the nucleus. Functionally, unknown; apparently not involved in somatic sex determination. The sequence is that of Sex-lethal homolog (SXL) from Ceratitis capitata (Mediterranean fruit fly).